Reading from the N-terminus, the 301-residue chain is Phosducin-like protein (301 aa).

The residue at position 2 (threonine 2) is an N-acetylthreonine. Positions 18–57 (SSSEDEDSDHEDKDRGRCAPASSSVPAEAELAGEGISVNT) are disordered. Residues serine 20 and serine 25 each carry the phosphoserine modification. Positions 36–49 (APASSSVPAEAELA) are enriched in low complexity. Residues 36-299 (APASSSVPAE…TCHSEDSDLE (264 aa)) enclose the Phosducin domain. Residues serine 226, serine 293, and serine 296 each carry the phosphoserine modification.

This sequence belongs to the phosducin family. As to quaternary structure, forms a complex with the beta and gamma subunits of the GTP-binding protein, transducin. Interacts with the CCT chaperonin complex.

It is found in the cell projection. Its subcellular location is the cilium. Its function is as follows. Acts as a positive regulator of hedgehog signaling and regulates ciliary function. Functionally, functions as a co-chaperone for CCT in the assembly of heterotrimeric G protein complexes, facilitates the assembly of both Gbeta-Ggamma and RGS-Gbeta5 heterodimers. In terms of biological role, acts as a negative regulator of heterotrimeric G proteins assembly by trapping the preloaded G beta subunits inside the CCT chaperonin. In Homo sapiens (Human), this protein is Phosducin-like protein (PDCL).